We begin with the raw amino-acid sequence, 378 residues long: Erythronate-4-phosphate dehydrogenase (378 aa).

Positions 45 and 66 each coordinate substrate. Positions 146 and 175 each coordinate NAD(+). Residue Arg208 is part of the active site. Asp232 is an NAD(+) binding site. Glu237 is a catalytic residue. His254 (proton donor) is an active-site residue. Gly257 contacts NAD(+). A substrate-binding site is contributed by Tyr258.

It belongs to the D-isomer specific 2-hydroxyacid dehydrogenase family. PdxB subfamily. As to quaternary structure, homodimer.

The protein resides in the cytoplasm. It catalyses the reaction 4-phospho-D-erythronate + NAD(+) = (R)-3-hydroxy-2-oxo-4-phosphooxybutanoate + NADH + H(+). The protein operates within cofactor biosynthesis; pyridoxine 5'-phosphate biosynthesis; pyridoxine 5'-phosphate from D-erythrose 4-phosphate: step 2/5. Its function is as follows. Catalyzes the oxidation of erythronate-4-phosphate to 3-hydroxy-2-oxo-4-phosphonooxybutanoate. In Escherichia coli O6:K15:H31 (strain 536 / UPEC), this protein is Erythronate-4-phosphate dehydrogenase.